The chain runs to 620 residues: 1-deoxy-D-xylulose-5-phosphate synthase (620 aa).

Thiamine diphosphate-binding positions include His-80 and 121-123; that span reads GHS. Asp-152 contacts Mg(2+). Residues 153 to 154, Asn-181, Tyr-288, and Glu-370 each bind thiamine diphosphate; that span reads GA. Residue Asn-181 participates in Mg(2+) binding.

It belongs to the transketolase family. DXPS subfamily. As to quaternary structure, homodimer. It depends on Mg(2+) as a cofactor. The cofactor is thiamine diphosphate.

It catalyses the reaction D-glyceraldehyde 3-phosphate + pyruvate + H(+) = 1-deoxy-D-xylulose 5-phosphate + CO2. The protein operates within metabolic intermediate biosynthesis; 1-deoxy-D-xylulose 5-phosphate biosynthesis; 1-deoxy-D-xylulose 5-phosphate from D-glyceraldehyde 3-phosphate and pyruvate: step 1/1. Its function is as follows. Catalyzes the acyloin condensation reaction between C atoms 2 and 3 of pyruvate and glyceraldehyde 3-phosphate to yield 1-deoxy-D-xylulose-5-phosphate (DXP). The sequence is that of 1-deoxy-D-xylulose-5-phosphate synthase from Salmonella agona (strain SL483).